Consider the following 386-residue polypeptide: Bifunctional enzyme IspD/IspF (386 aa).

Positions 1 to 229 (MIRGERVIGI…RARALLEAPV (229 aa)) are 2-C-methyl-D-erythritol 4-phosphate cytidylyltransferase. The tract at residues 230-386 (ATGVGYDTHR…AIALLVRAAG (157 aa)) is 2-C-methyl-D-erythritol 2,4-cyclodiphosphate synthase. Residues aspartate 236 and histidine 238 each contribute to the a divalent metal cation site. 4-CDP-2-C-methyl-D-erythritol 2-phosphate-binding positions include 236 to 238 (DTH) and 261 to 262 (HS). Histidine 269 contributes to the a divalent metal cation binding site. Residues 283–285 (DLG), 288–292 (FPDTD), 359–362 (TTGE), phenylalanine 366, and arginine 369 each bind 4-CDP-2-C-methyl-D-erythritol 2-phosphate.

This sequence in the N-terminal section; belongs to the IspD/TarI cytidylyltransferase family. IspD subfamily. The protein in the C-terminal section; belongs to the IspF family. It depends on a divalent metal cation as a cofactor.

The catalysed reaction is 2-C-methyl-D-erythritol 4-phosphate + CTP + H(+) = 4-CDP-2-C-methyl-D-erythritol + diphosphate. The enzyme catalyses 4-CDP-2-C-methyl-D-erythritol 2-phosphate = 2-C-methyl-D-erythritol 2,4-cyclic diphosphate + CMP. The protein operates within isoprenoid biosynthesis; isopentenyl diphosphate biosynthesis via DXP pathway; isopentenyl diphosphate from 1-deoxy-D-xylulose 5-phosphate: step 2/6. It participates in isoprenoid biosynthesis; isopentenyl diphosphate biosynthesis via DXP pathway; isopentenyl diphosphate from 1-deoxy-D-xylulose 5-phosphate: step 4/6. Its function is as follows. Bifunctional enzyme that catalyzes the formation of 4-diphosphocytidyl-2-C-methyl-D-erythritol from CTP and 2-C-methyl-D-erythritol 4-phosphate (MEP) (IspD), and catalyzes the conversion of 4-diphosphocytidyl-2-C-methyl-D-erythritol 2-phosphate (CDP-ME2P) to 2-C-methyl-D-erythritol 2,4-cyclodiphosphate (ME-CPP) with a corresponding release of cytidine 5-monophosphate (CMP) (IspF). This chain is Bifunctional enzyme IspD/IspF, found in Anaeromyxobacter dehalogenans (strain 2CP-C).